Reading from the N-terminus, the 100-residue chain is NADH-quinone oxidoreductase subunit K (100 aa).

The next 3 membrane-spanning stretches (helical) occupy residues 4 to 24, 28 to 48, and 60 to 80; these read TTWV…GLLS, LLFI…LFIA, and IMYL…LALV.

It belongs to the complex I subunit 4L family. In terms of assembly, NDH-1 is composed of 13 different subunits. Subunits NuoA, H, J, K, L, M, N constitute the membrane sector of the complex.

The protein localises to the cell inner membrane. It catalyses the reaction a quinone + NADH + 5 H(+)(in) = a quinol + NAD(+) + 4 H(+)(out). Functionally, NDH-1 shuttles electrons from NADH, via FMN and iron-sulfur (Fe-S) centers, to quinones in the respiratory chain. The immediate electron acceptor for the enzyme in this species is believed to be ubiquinone. Couples the redox reaction to proton translocation (for every two electrons transferred, four hydrogen ions are translocated across the cytoplasmic membrane), and thus conserves the redox energy in a proton gradient. The sequence is that of NADH-quinone oxidoreductase subunit K from Shewanella woodyi (strain ATCC 51908 / MS32).